The chain runs to 1298 residues: Outer capsid protein VP1 (1298 aa).

It belongs to the aquareoviridae outer capsid VP1 protein family.

The protein localises to the virion. It catalyses the reaction a 5'-end diphospho-ribonucleoside in mRNA + GTP + H(+) = a 5'-end (5'-triphosphoguanosine)-ribonucleoside in mRNA + diphosphate. It carries out the reaction a 5'-end (5'-triphosphoguanosine)-ribonucleoside in mRNA + S-adenosyl-L-methionine = a 5'-end (N(7)-methyl 5'-triphosphoguanosine)-ribonucleoside in mRNA + S-adenosyl-L-homocysteine. Outer capsid protein involved in mRNA capping. Catalyzes the last 3 enzymatic activities for formation of the 5' cap structure on the viral plus-strand transcripts, namely the RNA guanylyltransferase, RNA-7N- and RNA-2'O-methyltransferase activities. The chain is Outer capsid protein VP1 (S1) from Ctenopharyngodon idella (Grass carp).